Consider the following 292-residue polypeptide: NAD kinase (292 aa).

Catalysis depends on Asp-72, which acts as the Proton acceptor. Residues 72 to 73 (DG), 146 to 147 (NE), His-157, Arg-174, Asp-176, and 187 to 192 (TAYSLS) each bind NAD(+).

Belongs to the NAD kinase family. Requires a divalent metal cation as cofactor.

The protein localises to the cytoplasm. The catalysed reaction is NAD(+) + ATP = ADP + NADP(+) + H(+). Its function is as follows. Involved in the regulation of the intracellular balance of NAD and NADP, and is a key enzyme in the biosynthesis of NADP. Catalyzes specifically the phosphorylation on 2'-hydroxyl of the adenosine moiety of NAD to yield NADP. The sequence is that of NAD kinase from Shewanella woodyi (strain ATCC 51908 / MS32).